Reading from the N-terminus, the 360-residue chain is Peptide chain release factor 1 (360 aa).

At Gln235 the chain carries N5-methylglutamine.

It belongs to the prokaryotic/mitochondrial release factor family. Post-translationally, methylated by PrmC. Methylation increases the termination efficiency of RF1.

It is found in the cytoplasm. Functionally, peptide chain release factor 1 directs the termination of translation in response to the peptide chain termination codons UAG and UAA. This Bordetella parapertussis (strain 12822 / ATCC BAA-587 / NCTC 13253) protein is Peptide chain release factor 1.